The chain runs to 40 residues: Large ribosomal subunit protein bL36 (40 aa).

This sequence belongs to the bacterial ribosomal protein bL36 family.

This chain is Large ribosomal subunit protein bL36, found in Corynebacterium aurimucosum (strain ATCC 700975 / DSM 44827 / CIP 107346 / CN-1) (Corynebacterium nigricans).